The sequence spans 492 residues: 2,3-bisphosphoglycerate-independent phosphoglycerate mutase (492 aa).

The Mn(2+) site is built by Asp11 and Ser61. Catalysis depends on Ser61, which acts as the Phosphoserine intermediate. Substrate-binding positions include His118, 147 to 148, Arg177, Arg183, 248 to 251, and Lys321; these read RD and RSDR. Positions 387, 391, 428, 429, and 446 each coordinate Mn(2+).

The protein belongs to the BPG-independent phosphoglycerate mutase family. In terms of assembly, monomer. The cofactor is Mn(2+).

It catalyses the reaction (2R)-2-phosphoglycerate = (2R)-3-phosphoglycerate. It participates in carbohydrate degradation; glycolysis; pyruvate from D-glyceraldehyde 3-phosphate: step 3/5. In terms of biological role, catalyzes the interconversion of 2-phosphoglycerate and 3-phosphoglycerate. This is 2,3-bisphosphoglycerate-independent phosphoglycerate mutase from Wolinella succinogenes (strain ATCC 29543 / DSM 1740 / CCUG 13145 / JCM 31913 / LMG 7466 / NCTC 11488 / FDC 602W) (Vibrio succinogenes).